The sequence spans 595 residues: Probable translation initiation factor IF-2 (595 aa).

Residues leucine 11–leucine 225 form the tr-type G domain. Residues glycine 20–threonine 27 form a G1 region. Glycine 20–threonine 27 provides a ligand contact to GTP. A G2 region spans residues glycine 45 to histidine 49. The tract at residues aspartate 81–glycine 84 is G3. GTP-binding positions include aspartate 81 to histidine 85 and asparagine 135 to aspartate 138. The G4 stretch occupies residues asparagine 135 to aspartate 138. The interval serine 203–leucine 205 is G5.

This sequence belongs to the TRAFAC class translation factor GTPase superfamily. Classic translation factor GTPase family. IF-2 subfamily.

Functionally, function in general translation initiation by promoting the binding of the formylmethionine-tRNA to ribosomes. Seems to function along with eIF-2. This chain is Probable translation initiation factor IF-2 (infB), found in Archaeoglobus fulgidus (strain ATCC 49558 / DSM 4304 / JCM 9628 / NBRC 100126 / VC-16).